Consider the following 740-residue polypeptide: Homeobox protein 4 (740 aa).

Residues 1-13 (MNTVEENNTKITD) are compositionally biased toward polar residues. Disordered stretches follow at residues 1 to 41 (MNTV…ENLS) and 179 to 491 (NNNN…NNEI). 4 stretches are compositionally biased toward low complexity: residues 14-34 (NNNN…NNKN), 179-241 (NNNN…PQQN), 251-288 (NNNN…NNNN), and 303-316 (STTD…SVPS). Positions 254–287 (NINNNNINKNNNNYNNNNNNKNNNNNNNNNNNNN) form a coiled coil. Residues 317–328 (NKKKSSKTKQKS) show a composition bias toward basic residues. Over residues 339–363 (HKSNYHQQPNQNSQHLQSKPNSPIL) the composition is skewed to polar residues. Composition is skewed to low complexity over residues 365–390 (SSPL…SPPQ) and 397–491 (NNNF…NNEI). Residues 472–500 (NTNTNNNNNKNNNNNNNNEIENNNNEELI) adopt a coiled-coil conformation. Positions 605-667 (RPKKGAKLSK…NTRRRKVPTL (63 aa)) form a DNA-binding region, homeobox. Residues 686 to 722 (NNNNNNGGNSNFKNNNNNTITTTSTSNNNNNNNNNNH) show a composition bias toward low complexity. The disordered stretch occupies residues 686–740 (NNNNNNGGNSNFKNNNNNTITTTSTSNNNNNNNNNNHNEMECDDGENEESSEYDD). The span at 726 to 740 (ECDDGENEESSEYDD) shows a compositional bias: acidic residues.

The protein localises to the nucleus. In terms of biological role, putative transcription factor. The protein is Homeobox protein 4 (hbx4) of Dictyostelium discoideum (Social amoeba).